The chain runs to 245 residues: tRNA pseudouridine synthase A (245 aa).

Asp-52 serves as the catalytic Nucleophile. Residue Tyr-111 coordinates substrate.

This sequence belongs to the tRNA pseudouridine synthase TruA family. Homodimer.

It carries out the reaction uridine(38/39/40) in tRNA = pseudouridine(38/39/40) in tRNA. Its function is as follows. Formation of pseudouridine at positions 38, 39 and 40 in the anticodon stem and loop of transfer RNAs. The sequence is that of tRNA pseudouridine synthase A from Rickettsia prowazekii (strain Madrid E).